Reading from the N-terminus, the 382-residue chain is Protein delta homolog 2 (382 aa).

The signal sequence occupies residues 1-26 (MPSGCRCLNLVCLLCILGATSQPARA). 4 consecutive EGF-like domains span residues 27 to 58 (DDCS…LHCE), 62 to 89 (RMPG…KFCD), 91 to 129 (DEHI…RGCE), and 131 to 172 (KAGP…AHCE). Over 27–305 (DDCSSHCDLA…RQESGLGESS (279 aa)) the chain is Extracellular. 17 disulfides stabilise this stretch: cysteine 29–cysteine 40, cysteine 33–cysteine 46, cysteine 48–cysteine 57, cysteine 66–cysteine 71, cysteine 79–cysteine 88, cysteine 95–cysteine 107, cysteine 101–cysteine 117, cysteine 119–cysteine 128, cysteine 135–cysteine 148, cysteine 142–cysteine 160, cysteine 162–cysteine 171, cysteine 178–cysteine 189, cysteine 183–cysteine 198, cysteine 200–cysteine 209, cysteine 216–cysteine 227, cysteine 221–cysteine 236, and cysteine 238–cysteine 247. Asparagine 157 is a glycosylation site (N-linked (GlcNAc...) asparagine). The EGF-like 5; calcium-binding domain occupies 174-210 (NVDDCLMRPCANGATCIDGINRFSCLCPEGFAGRFCT). The 37-residue stretch at 212–248 (NLDDCASRPCQRGARCRDRVHDFDCLCPSGYGGKTCE) folds into the EGF-like 6; calcium-binding domain. The helical transmembrane segment at 306–326 (LVALVVFGSLTAALVLATVLL) threads the bilayer. Residues 327–382 (TLRAWRRGICPTGPCCYPAPHYAPARQDQECQVSMLPAGFPLSPDLPPEPGKTTAL) are Cytoplasmic-facing.

Detected in a number of tissues including lung, brain, adrenal gland, testis, adult liver, placenta, ovary and thymus. Not detected in fetal liver or in adult spleen, muscle and heart.

Its subcellular location is the membrane. Functionally, regulates adipogenesis. The chain is Protein delta homolog 2 (Dlk2) from Mus musculus (Mouse).